The sequence spans 314 residues: 2,3-dihydroxyphenylpropionate/2,3-dihydroxicinnamic acid 1,2-dioxygenase (314 aa).

Histidine 115 serves as the catalytic Proton donor. The active-site Proton acceptor is the histidine 179.

Belongs to the LigB/MhpB extradiol dioxygenase family. Homotetramer. Fe(2+) serves as cofactor.

It catalyses the reaction 3-(2,3-dihydroxyphenyl)propanoate + O2 = (2Z,4E)-2-hydroxy-6-oxonona-2,4-dienedioate + H(+). It carries out the reaction (2E)-3-(2,3-dihydroxyphenyl)prop-2-enoate + O2 = (2Z,4E,7E)-2-hydroxy-6-oxonona-2,4,7-trienedioate + H(+). The protein operates within aromatic compound metabolism; 3-phenylpropanoate degradation. Functionally, catalyzes the non-heme iron(II)-dependent oxidative cleavage of 2,3-dihydroxyphenylpropionic acid and 2,3-dihydroxicinnamic acid into 2-hydroxy-6-ketononadienedioate and 2-hydroxy-6-ketononatrienedioate, respectively. This Klebsiella pneumoniae subsp. pneumoniae (strain ATCC 700721 / MGH 78578) protein is 2,3-dihydroxyphenylpropionate/2,3-dihydroxicinnamic acid 1,2-dioxygenase.